The sequence spans 317 residues: MTCKIIGCGQYLPSKIVSNDELTKFVDTNDEWIRTRTGITQRHIADDTEYTSHLALKSAEKAIEDAGISANDIDLIIICTTTPDHSFPSVATKLQGYLGLTNIPSFDLQAVCAGFVYGLQVANSLIASSKYKTVLLIGAEKMTSLLDWNDRSTCVLFGDGAGSVILQRSSDDSGLIESNIFSSGIDYDILYTNGGISMNGTSGKIIMQGQKLFRHAIEKMQQSIEELLCANQFSVSDIDYFIPHQANVRIINKLAELLNIEEHKIIKTVEKHANCSAASIPLALSTLKGLGKIKKGDILLFSAIGAGLTWGSALIRW.

Residues C112 and H244 contribute to the active site. The segment at 245–249 (QANVR) is ACP-binding. The active site involves N274.

The protein belongs to the thiolase-like superfamily. FabH family. As to quaternary structure, homodimer.

The protein localises to the cytoplasm. The enzyme catalyses malonyl-[ACP] + acetyl-CoA + H(+) = 3-oxobutanoyl-[ACP] + CO2 + CoA. Its pathway is lipid metabolism; fatty acid biosynthesis. Functionally, catalyzes the condensation reaction of fatty acid synthesis by the addition to an acyl acceptor of two carbons from malonyl-ACP. Catalyzes the first condensation reaction which initiates fatty acid synthesis and may therefore play a role in governing the total rate of fatty acid production. Possesses both acetoacetyl-ACP synthase and acetyl transacylase activities. Its substrate specificity determines the biosynthesis of branched-chain and/or straight-chain of fatty acids. This Rickettsia canadensis (strain McKiel) protein is Beta-ketoacyl-[acyl-carrier-protein] synthase III.